We begin with the raw amino-acid sequence, 139 residues long: MLKEFREFAMKGNVVDLAVAVIIGAAFGAIVSSMVADVIMPIIGAVTGGLDFSNYFTGLSKTVTATNLADAKKQGAVLAWGNFLTLTLNFLIVAFVLFMVVRFMSKLKRKDEAAPAAPPKPTREEELLTEIRDLLKTKK.

A run of 2 helical transmembrane segments spans residues 19 to 39 (VAVI…ADVI) and 81 to 101 (GNFL…FMVV).

It belongs to the MscL family. In terms of assembly, homopentamer.

Its subcellular location is the cell inner membrane. Functionally, channel that opens in response to stretch forces in the membrane lipid bilayer. May participate in the regulation of osmotic pressure changes within the cell. The sequence is that of Large-conductance mechanosensitive channel from Nitrobacter hamburgensis (strain DSM 10229 / NCIMB 13809 / X14).